A 405-amino-acid chain; its full sequence is Arginine biosynthesis bifunctional protein ArgJ (405 aa).

Substrate contacts are provided by Thr152, Lys178, Thr189, Glu276, Asn400, and Thr405. Residue Thr189 is the Nucleophile of the active site.

This sequence belongs to the ArgJ family. Heterotetramer of two alpha and two beta chains.

It is found in the cytoplasm. The enzyme catalyses N(2)-acetyl-L-ornithine + L-glutamate = N-acetyl-L-glutamate + L-ornithine. It carries out the reaction L-glutamate + acetyl-CoA = N-acetyl-L-glutamate + CoA + H(+). It functions in the pathway amino-acid biosynthesis; L-arginine biosynthesis; L-ornithine and N-acetyl-L-glutamate from L-glutamate and N(2)-acetyl-L-ornithine (cyclic): step 1/1. It participates in amino-acid biosynthesis; L-arginine biosynthesis; N(2)-acetyl-L-ornithine from L-glutamate: step 1/4. Its function is as follows. Catalyzes two activities which are involved in the cyclic version of arginine biosynthesis: the synthesis of N-acetylglutamate from glutamate and acetyl-CoA as the acetyl donor, and of ornithine by transacetylation between N(2)-acetylornithine and glutamate. The chain is Arginine biosynthesis bifunctional protein ArgJ from Pseudomonas fluorescens (strain Pf0-1).